A 639-amino-acid chain; its full sequence is ATP-dependent zinc metalloprotease FtsH (639 aa).

Residues 1 to 20 (MNGNNNMNNNGKSNNKKKNK) lie on the Cytoplasmic side of the membrane. The chain crosses the membrane as a helical span at residues 21–41 (NWILGLVVVFLISAIFMSYFI). The Periplasmic portion of the chain corresponds to 42–120 (RGGESYKNVP…LSSGKSQASL (79 aa)). A helical membrane pass occupies residues 121-141 (IGVLLQTLPWILFFIFFFFIF). Residues 142-639 (RQTQGGGGKV…KEVKGEDVKG (498 aa)) lie on the Cytoplasmic side of the membrane. An ATP-binding site is contributed by 212–219 (GSPGTGKT). Residue His434 coordinates Zn(2+). Glu435 is a catalytic residue. Zn(2+)-binding residues include His438 and Asp510.

In the central section; belongs to the AAA ATPase family. It in the C-terminal section; belongs to the peptidase M41 family. As to quaternary structure, homohexamer. Zn(2+) serves as cofactor.

It is found in the cell inner membrane. Acts as a processive, ATP-dependent zinc metallopeptidase for both cytoplasmic and membrane proteins. Plays a role in the quality control of integral membrane proteins. The polypeptide is ATP-dependent zinc metalloprotease FtsH (Borreliella burgdorferi (strain ZS7) (Borrelia burgdorferi)).